The chain runs to 293 residues: uncharacterized protein (293 aa).

Residues 1–58 form the HTH lysR-type domain; the sequence is MQLQELHMLVVLAEELNMRKAAERLFVSQPALSQRLQTIEKAWGTKIFLRSQKGLTVT. Positions 18 to 37 form a DNA-binding region, H-T-H motif; the sequence is MRKAAERLFVSQPALSQRLQ.

Belongs to the LysR transcriptional regulatory family.

This is an uncharacterized protein from Bacillus subtilis (strain 168).